A 506-amino-acid polypeptide reads, in one-letter code: Glutamate--tRNA ligase (506 aa).

The 'HIGH' region signature appears at 12 to 22 (PSPTGDPHVGT). Residues 253–257 (KLSKR) carry the 'KMSKS' region motif. Lys-256 is an ATP binding site.

It belongs to the class-I aminoacyl-tRNA synthetase family. Glutamate--tRNA ligase type 1 subfamily. Monomer.

The protein resides in the cytoplasm. The catalysed reaction is tRNA(Glu) + L-glutamate + ATP = L-glutamyl-tRNA(Glu) + AMP + diphosphate. In terms of biological role, catalyzes the attachment of glutamate to tRNA(Glu) in a two-step reaction: glutamate is first activated by ATP to form Glu-AMP and then transferred to the acceptor end of tRNA(Glu). The protein is Glutamate--tRNA ligase of Chlamydia trachomatis serovar L2 (strain ATCC VR-902B / DSM 19102 / 434/Bu).